The following is a 270-amino-acid chain: Tetraspanin-17 (270 aa).

The Cytoplasmic portion of the chain corresponds to 1–19 (MPGKHQQFQDPEVGCCGKY). Residues 20-40 (FLFGFNIVFWVLGALFLAIGL) form a helical membrane-spanning segment. The Extracellular portion of the chain corresponds to 41 to 63 (WAWGEKGVLSNISGLTDLGGLDP). Residue N51 is glycosylated (N-linked (GlcNAc...) asparagine). The helical transmembrane segment at 64–84 (VWLFVVIGGIMSVLGFAGCIG) threads the bilayer. Over 85 to 94 (ALRENTFLLK) the chain is Cytoplasmic. Residues 95–115 (FFSVFLGLIFFLELAAGILAF) traverse the membrane as a helical segment. Residues 116-234 (VFKDWIRDQL…GQFEKWLQDN (119 aa)) are Extracellular-facing. 4 cysteine pairs are disulfide-bonded: C155-C223, C156-C188, C172-C182, and C189-C202. N171 carries N-linked (GlcNAc...) asparagine glycosylation. Residues 235–255 (LIVVAGVLVAIALLQICGICL) form a helical membrane-spanning segment. At 256-270 (AQNLVSDIEAVKANW) the chain is on the cytoplasmic side.

The protein belongs to the tetraspanin (TM4SF) family. Interacts with ADAM10; the interaction influences ADAM10 substrate specificity, endocytosis and turnover.

The protein resides in the cell membrane. Part of TspanC8 subgroup, composed of 6 members that interact with the transmembrane metalloprotease ADAM10. This interaction is required for ADAM10 exit from the endoplasmic reticulum and for enzymatic maturation and trafficking to the cell surface as well as substrate specificity. Different TspanC8/ADAM10 complexes have distinct substrates. Seems to regulate VE-cadherin expression in endothelial cells probably through interaction with ADAM10, promoting leukocyte transmigration. This is Tetraspanin-17 (Tspan17) from Rattus norvegicus (Rat).